A 285-amino-acid chain; its full sequence is NAC domain-containing protein 92 (285 aa).

Residues 20–170 form the NAC domain; it reads LPPGFRFHPT…EWVICRVFQK (151 aa). The DNA-binding element occupies 117-176; that stretch reads VGMKKTLVFYKGRAPKGVKTNWVMHEYRLEGKYCIENLPQTAKNEWVICRVFQKRADGTK.

In terms of assembly, forms homodimers. Interacts with GLK1 and GLK2. Interacts with NLA. In terms of processing, ubiquitinated by NLA. Ubiquitination of NAC92 leads to its degradation by the proteasome during leaf senescence under nitrogen deficiency. Mostly expressed in roots and flowers, and, to a lower extent, in shoots and leaves. Particularly expressed in old and senescing tissues.

The protein resides in the nucleus. In terms of biological role, transcription activator that binds to DNA in promoters of target genes on a specific bipartite motif 5'-[ACG][CA]GT[AG](5-6n)[CT]AC[AG]-3'. Promotes lateral root development. Triggers the expression of senescence-associated genes during age-, salt- and dark-induced senescence through a regulatory network that may involve cross-talk with salt- and H(2)O(2)-dependent signaling pathways. Also regulates genes during seed germination. Positively regulates aging-induced cell death. Involved in age-related resistance (ARR) against Pseudomonas syringae pv. tomato and Hyaloperonospora arabidopsidis. Antagonizes GLK1 and GLK2 transcriptional activity, shifting the balance from chloroplast maintenance towards deterioration during leaf senescence. Promotes the expression of senescence-associated genes, including ENDO1/BFN1, SWEET15/SAG29 and SINA1/At3g13672, during senescence onset. In Arabidopsis thaliana (Mouse-ear cress), this protein is NAC domain-containing protein 92.